The sequence spans 302 residues: Sulfate adenylyltransferase subunit 2 (302 aa).

This sequence belongs to the PAPS reductase family. CysD subfamily. Heterodimer composed of CysD, the smaller subunit, and CysN.

The enzyme catalyses sulfate + ATP + H(+) = adenosine 5'-phosphosulfate + diphosphate. It participates in sulfur metabolism; hydrogen sulfide biosynthesis; sulfite from sulfate: step 1/3. With CysN forms the ATP sulfurylase (ATPS) that catalyzes the adenylation of sulfate producing adenosine 5'-phosphosulfate (APS) and diphosphate, the first enzymatic step in sulfur assimilation pathway. APS synthesis involves the formation of a high-energy phosphoric-sulfuric acid anhydride bond driven by GTP hydrolysis by CysN coupled to ATP hydrolysis by CysD. This Methylococcus capsulatus (strain ATCC 33009 / NCIMB 11132 / Bath) protein is Sulfate adenylyltransferase subunit 2.